A 652-amino-acid polypeptide reads, in one-letter code: tRNA 5-methylaminomethyl-2-thiouridine biosynthesis bifunctional protein MnmC (652 aa).

The tRNA (mnm(5)s(2)U34)-methyltransferase stretch occupies residues 1-235 (MPDRLVPATL…EPALRVGEYA (235 aa)). Positions 259 to 652 (IGAGLAGCAV…IRALRGRQIG (394 aa)) are FAD-dependent cmnm(5)s(2)U34 oxidoreductase.

This sequence in the N-terminal section; belongs to the methyltransferase superfamily. tRNA (mnm(5)s(2)U34)-methyltransferase family. The protein in the C-terminal section; belongs to the DAO family. The cofactor is FAD.

Its subcellular location is the cytoplasm. The enzyme catalyses 5-aminomethyl-2-thiouridine(34) in tRNA + S-adenosyl-L-methionine = 5-methylaminomethyl-2-thiouridine(34) in tRNA + S-adenosyl-L-homocysteine + H(+). Functionally, catalyzes the last two steps in the biosynthesis of 5-methylaminomethyl-2-thiouridine (mnm(5)s(2)U) at the wobble position (U34) in tRNA. Catalyzes the FAD-dependent demodification of cmnm(5)s(2)U34 to nm(5)s(2)U34, followed by the transfer of a methyl group from S-adenosyl-L-methionine to nm(5)s(2)U34, to form mnm(5)s(2)U34. This chain is tRNA 5-methylaminomethyl-2-thiouridine biosynthesis bifunctional protein MnmC, found in Burkholderia ambifaria (strain MC40-6).